The sequence spans 434 residues: Cobyrinate a,c-diamide synthase (434 aa).

Positions 239–430 constitute a GATase cobBQ-type domain; it reads KMAIAYDPAF…SHLHFSNFQL (192 aa). Cysteine 320 acts as the Nucleophile in catalysis.

Belongs to the CobB/CbiA family. Mg(2+) serves as cofactor.

It catalyses the reaction cob(II)yrinate + 2 L-glutamine + 2 ATP + 2 H2O = cob(II)yrinate a,c diamide + 2 L-glutamate + 2 ADP + 2 phosphate + 2 H(+). Its pathway is cofactor biosynthesis; adenosylcobalamin biosynthesis; cob(II)yrinate a,c-diamide from sirohydrochlorin (anaerobic route): step 10/10. Catalyzes the ATP-dependent amidation of the two carboxylate groups at positions a and c of cobyrinate, using either L-glutamine or ammonia as the nitrogen source. In Saccharolobus solfataricus (strain ATCC 35092 / DSM 1617 / JCM 11322 / P2) (Sulfolobus solfataricus), this protein is Cobyrinate a,c-diamide synthase.